The following is a 186-amino-acid chain: NADH-quinone oxidoreductase subunit B (186 aa).

The [4Fe-4S] cluster site is built by cysteine 44, cysteine 45, cysteine 110, and cysteine 139.

This sequence belongs to the complex I 20 kDa subunit family. NDH-1 is composed of 14 different subunits. Subunits NuoB, C, D, E, F, and G constitute the peripheral sector of the complex. Requires [4Fe-4S] cluster as cofactor.

It localises to the cell inner membrane. The catalysed reaction is a quinone + NADH + 5 H(+)(in) = a quinol + NAD(+) + 4 H(+)(out). In terms of biological role, NDH-1 shuttles electrons from NADH, via FMN and iron-sulfur (Fe-S) centers, to quinones in the respiratory chain. The immediate electron acceptor for the enzyme in this species is believed to be ubiquinone. Couples the redox reaction to proton translocation (for every two electrons transferred, four hydrogen ions are translocated across the cytoplasmic membrane), and thus conserves the redox energy in a proton gradient. The chain is NADH-quinone oxidoreductase subunit B from Leptospira borgpetersenii serovar Hardjo-bovis (strain JB197).